The sequence spans 419 residues: uncharacterized protein (419 aa).

Helical transmembrane passes span 15–35 (RVLM…MPYL), 36–56 (ADYL…VMGV), 77–99 (YKPL…VVAQ), 104–126 (VLIA…RGYL), 140–160 (MFNV…LVLL), 166–186 (ITVL…LVAL), 213–233 (FLTL…IYLA), 246–266 (QYLL…GGQL), 282–302 (LVVG…IPNG), 309–329 (VAVM…AALF), 351–371 (FYST…GSLM), and 377–397 (LNTD…AVAG).

This sequence belongs to the major facilitator superfamily.

The protein localises to the cell membrane. This is an uncharacterized protein from Mycobacterium tuberculosis (strain CDC 1551 / Oshkosh).